Here is a 25-residue protein sequence, read N- to C-terminus: Cytochrome c oxidase subunit 1 (25 aa).

This sequence belongs to the heme-copper respiratory oxidase family. Cu(2+) serves as cofactor. It depends on heme as a cofactor.

Its subcellular location is the cell inner membrane. The enzyme catalyses 4 Fe(II)-[cytochrome c] + O2 + 8 H(+)(in) = 4 Fe(III)-[cytochrome c] + 2 H2O + 4 H(+)(out). It participates in energy metabolism; oxidative phosphorylation. In terms of biological role, subunit I and II form the functional core of the enzyme complex. Electrons originating in cytochrome c are transferred via heme a and Cu(A) to the binuclear center formed by heme a3 and Cu(B). This cytochrome c oxidase shows proton pump activity across the membrane in addition to the electron transfer. This Paracoccus versutus (Thiobacillus versutus) protein is Cytochrome c oxidase subunit 1 (ctaD).